Here is a 528-residue protein sequence, read N- to C-terminus: Peptide chain release factor 3 (528 aa).

Residues arginine 9–arginine 280 form the tr-type G domain. GTP contacts are provided by residues serine 18–threonine 25, aspartate 86–histidine 90, and asparagine 140–aspartate 143.

It belongs to the TRAFAC class translation factor GTPase superfamily. Classic translation factor GTPase family. PrfC subfamily.

It is found in the cytoplasm. Increases the formation of ribosomal termination complexes and stimulates activities of RF-1 and RF-2. It binds guanine nucleotides and has strong preference for UGA stop codons. It may interact directly with the ribosome. The stimulation of RF-1 and RF-2 is significantly reduced by GTP and GDP, but not by GMP. In Symbiobacterium thermophilum (strain DSM 24528 / JCM 14929 / IAM 14863 / T), this protein is Peptide chain release factor 3.